The primary structure comprises 561 residues: MALPPSGETQSQDKANYLPQSNPHHLTTYYAHAPGYSHFRNLATTEEEFQPWKLAAAVLESQAMAPLDAFRMTAPLLNPGLAVQSEPLYNLPWYKLSPWNRIPQFTPEVPRFLDSTEHRSSGSSNQNLVLGGGGGQISGQRWEAENLLLPSPVIASLLPDGIKSSQSISVPQTLNQEGKLPFCGFNFTEEELSFVLYGAIASPEHPTDLQHAISGILVPTESSGSNHLHKTLDKDSLQLPEGLCLMQTSFGDVPHFGVFCSDFIAKGVRFGPFRGRVVNASEVKAHRDNSRMWEIFEDGHLSHFIDGKGSGNWMSYVNCARFPKEQNLLAVQHQGQIFYESCRDIQRNQELLVWYGNGYEKFLGVPMNLRVTEQGGQQLSESSEESAEGYRCERCGKVFTYKYYRDKHLKYTPCVDKGDRKFPCSLCQRSFEKRDRLRIHILHVHERHRPYLCSTCGKSFSQSSSLNKHMRVHSGDRPYQCVYCTKKFTASSILRTHIRQHSGEKPFKCKHCGKAFASHAAHDSHVRRSHKDNGRSSCDICGKGFLDQEAFYAHMRLHKTC.

Residues 1–20 (MALPPSGETQSQDKANYLPQ) are disordered. The segment covering 7–20 (GETQSQDKANYLPQ) has biased composition (polar residues). The segment at 184-373 (GFNFTEEELS…GVPMNLRVTE (190 aa)) is interaction with CBFA2T2. One can recognise an SET domain in the interval 241–356 (EGLCLMQTSF…RNQELLVWYG (116 aa)). Y355 serves as a coordination point for S-adenosyl-L-methionine. A C2H2-type 1; atypical zinc finger spans residues 390-416 (YRCERCGKVFTYKYYRDKHLKYTPCVD). 5 consecutive C2H2-type zinc fingers follow at residues 422–445 (FPCS…LHVH), 451–473 (YLCS…MRVH), 479–501 (YQCV…IRQH), 507–530 (FKCK…RRSH), and 536–558 (SSCD…MRLH).

This sequence belongs to the class V-like SAM-binding methyltransferase superfamily. In terms of assembly, interacts with CBFA2T2. As to expression, restricted to embryonic stem cells and primordial germ cells. Not detected in epiblast-derived stem cells.

Its subcellular location is the nucleus. In terms of biological role, transcription factor that has both positive and negative roles on transcription. Plays a role in cellular pluripotency. Essential for germ cell development at 2 levels: the reacquisition of potential pluripotency, including SOX2 up-regulation, and successful epigenetic reprogramming, characterized by EHMT1 repression. Its association with CBFA2T2 is required for the functions in pluripotency and germ cell formation. The protein is PR domain zinc finger protein 14 (Prdm14) of Mus musculus (Mouse).